A 590-amino-acid polypeptide reads, in one-letter code: Muscarinic acetylcholine receptor M3 (590 aa).

Residues M1–Q67 lie on the Extracellular side of the membrane. Residues N5, N6, N15, N41, and N48 are each glycosylated (N-linked (GlcNAc...) asparagine). Residues V68 to V91 traverse the membrane as a helical segment. Topologically, residues S92–N104 are cytoplasmic. The chain crosses the membrane as a helical span at residues Y105 to I130. The Extracellular portion of the chain corresponds to M131–D142. Residues C141 and C221 are joined by a disulfide bond. A helical transmembrane segment spans residues L143 to F164. The Cytoplasmic segment spans residues D165 to R184. The chain crosses the membrane as a helical span at residues A185–F206. Residues W207 to P229 are Extracellular-facing. Residues T230–W252 traverse the membrane as a helical segment. The Cytoplasmic segment spans residues R253 to Q491. A Basolateral sorting signal motif is present at residues A275–V281. The tract at residues S323–I357 is disordered. Over residues S334–S345 the composition is skewed to low complexity. S385 carries the post-translational modification Phosphoserine. The chain crosses the membrane as a helical span at residues T492–N514. Residues T515–W526 are Extracellular-facing. C517 and C520 are oxidised to a cystine. A helical membrane pass occupies residues N527–L546. At C547–L590 the chain is on the cytoplasmic side.

This sequence belongs to the G-protein coupled receptor 1 family. Muscarinic acetylcholine receptor subfamily. CHRM3 sub-subfamily. As to quaternary structure, homodimer; the dimers can form tetramers. Interacts with NALCN. Interacts with TMEM147.

It localises to the cell membrane. The protein localises to the postsynaptic cell membrane. The protein resides in the basolateral cell membrane. Its subcellular location is the endoplasmic reticulum membrane. Functionally, the muscarinic acetylcholine receptor mediates various cellular responses, including inhibition of adenylate cyclase, breakdown of phosphoinositides and modulation of potassium channels through the action of G proteins. Primary transducing effect is Pi turnover. The sequence is that of Muscarinic acetylcholine receptor M3 (CHRM3) from Gorilla gorilla gorilla (Western lowland gorilla).